The chain runs to 165 residues: MKTMKKYIKTAFFCSMYWLIVQLNIANLGTRIPDKYFRQKYIIFKSFNFEKHGKFWNKWFYVRKWKHKILDGHQLNQNIYDQRHLMTINTDEIEKMIIETKRAELIHWISILPVIIFNKGPRLVKYINIFYAMIANVPIIIVQRYNRPRLTQLLRILKRKGERHD.

The signal sequence occupies residues 1–28 (MKTMKKYIKTAFFCSMYWLIVQLNIANL). Residues 126–145 (YINIFYAMIANVPIIIVQRY) traverse the membrane as a helical segment.

This sequence belongs to the acyltransferase CrtO family.

The protein resides in the cell membrane. It participates in carotenoid biosynthesis; staphyloxanthin biosynthesis; staphyloxanthin from farnesyl diphosphate: step 5/5. In terms of biological role, catalyzes the acylation of glycosyl-4,4'-diaponeurosporenoate, i.e. the esterification of glucose at the C6'' position with the carboxyl group of the C(15) fatty acid 12-methyltetradecanoic acid, to yield staphyloxanthin. This is the last step in the biosynthesis of this orange pigment, present in most staphylococci strains. This chain is Glycosyl-4,4'-diaponeurosporenoate acyltransferase (crtO), found in Staphylococcus aureus (strain Newman).